The primary structure comprises 314 residues: Transcriptional regulatory protein GlnL (314 aa).

One can recognise a Response regulatory domain in the interval 2 to 118 (RFFIADDDRA…EIVTVLQKVK (117 aa)). Aspartate 54 is subject to 4-aspartylphosphate.

In terms of processing, phosphorylated by GlnK.

The protein localises to the cytoplasm. Member of the two-component regulatory system GlnL/GlnK that positively regulates the expression of the glsA-glnT operon in response to glutamine. GlnL binds the promoter region of glsA-glnT in vitro. This chain is Transcriptional regulatory protein GlnL (glnL), found in Bacillus subtilis (strain 168).